The following is a 544-amino-acid chain: Membrane protein insertase YidC (544 aa).

The disordered stretch occupies residues 29–58 (TPKADPSATTQTLNPTSSESEDYVPTSSDS). Polar residues predominate over residues 35–46 (SATTQTLNPTSS). 3 helical membrane-spanning segments follow: residues 341-361 (FVLL…IIAI), 421-441 (GGCF…YVFL), and 499-519 (PVIF…YWLV).

This sequence belongs to the OXA1/ALB3/YidC family. Type 1 subfamily. In terms of assembly, interacts with the Sec translocase complex via SecD. Specifically interacts with transmembrane segments of nascent integral membrane proteins during membrane integration.

Its subcellular location is the cell inner membrane. Its function is as follows. Required for the insertion and/or proper folding and/or complex formation of integral membrane proteins into the membrane. Involved in integration of membrane proteins that insert both dependently and independently of the Sec translocase complex, as well as at least some lipoproteins. Aids folding of multispanning membrane proteins. In Pseudoalteromonas translucida (strain TAC 125), this protein is Membrane protein insertase YidC.